Reading from the N-terminus, the 1130-residue chain is Alpha-mannosidase 2 (1130 aa).

At 1–14 the chain is on the cytoplasmic side; sequence MRTRVLRCRPFSTR. A helical; Signal-anchor for type II membrane protein membrane pass occupies residues 15 to 35; it reads ILLLLLFVLAFGVYCYFYNAS. Over 36–1130 the chain is Lumenal; the sequence is PQNYNKPRIS…MEVKTYKIRF (1095 aa). The N-linked (GlcNAc...) asparagine glycan is linked to asparagine 117. Zn(2+)-binding residues include histidine 133 and aspartate 135. Asparagine 166 carries N-linked (GlcNAc...) asparagine glycosylation. Residues aspartate 247 and histidine 527 each contribute to the Zn(2+) site. Aspartate 247 serves as the catalytic Nucleophile. Residues asparagine 622, asparagine 683, asparagine 1056, and asparagine 1095 are each glycosylated (N-linked (GlcNAc...) asparagine).

It belongs to the glycosyl hydrolase 38 family. Homodimer; disulfide-linked. Requires Zn(2+) as cofactor. N-glycosylated.

The protein localises to the microsome membrane. It is found in the golgi apparatus membrane. The catalysed reaction is N(4)-{beta-D-GlcNAc-(1-&gt;2)-alpha-D-Man-(1-&gt;3)-[alpha-D-Man-(1-&gt;3)-[alpha-D-Man-(1-&gt;6)]-alpha-D-Man-(1-&gt;6)]-beta-D-Man-(1-&gt;4)-beta-D-GlcNAc-(1-&gt;4)-beta-D-GlcNAc}-L-asparaginyl-[protein] + 2 H2O = 2 alpha-D-mannopyranose + an N(4)-{beta-D-GlcNAc-(1-&gt;2)-alpha-D-Man-(1-&gt;3)-[alpha-D-Man-(1-&gt;6)]-beta-D-Man-(1-&gt;4)-beta-D-GlcNAc-(1-&gt;4)-beta-D-GlcNAc}-L-asparaginyl-[protein]. It functions in the pathway protein modification; protein glycosylation. Its activity is regulated as follows. Inhibited by swainsonine. Functionally, catalyzes the first committed step in the biosynthesis of complex N-glycans. It controls conversion of high mannose to complex N-glycans; the final hydrolytic step in the N-glycan maturation pathway. This chain is Alpha-mannosidase 2, found in Spodoptera frugiperda (Fall armyworm).